Here is a 697-residue protein sequence, read N- to C-terminus: Pentatricopeptide repeat-containing protein 1, mitochondrial (697 aa).

Residues 1 to 36 constitute a mitochondrion transit peptide; it reads MLKRAHYVALHVTLNHNGLSYQRVFSCLTQFPMLRH. PPR repeat units follow at residues 257 to 288 and 294 to 328; these read RPFT…VKNK and SDVF…NVNF.

Its subcellular location is the mitochondrion. Functionally, mitochondrial RNA-binding protein required for the stability of the cox2 and cox3 mRNAs. This chain is Pentatricopeptide repeat-containing protein 1, mitochondrial (ppr1), found in Schizosaccharomyces pombe (strain 972 / ATCC 24843) (Fission yeast).